Here is a 524-residue protein sequence, read N- to C-terminus: 5'-AMP-activated protein kinase subunit gamma-2 (524 aa).

A disordered region spans residues 1–178; sequence MPLLDGDLEG…TRPPLASPTH (178 aa). 8 positions are modified to phosphoserine: serine 21, serine 27, serine 29, serine 46, serine 94, serine 99, serine 117, and serine 118. Over residues 112 to 123 the composition is skewed to low complexity; it reads TSGLSSSPSTPT. Phosphothreonine is present on threonine 121. Residues 135-145 show a composition bias toward basic and acidic residues; sequence SYKHEPERLEN. A compositionally biased stretch (polar residues) spans 148-168; sequence YASSSPPDTGQRFCPSSFQSP. Serine 152 bears the Phosphoserine mark. 3 consecutive CBS domains span residues 230 to 290, 312 to 370, and 385 to 447; these read PTSS…KSPM, TFKP…MSDM, and IGTY…NLDI. ADP-binding positions include arginine 257, 272–277, valine 317, 338–339, and lysine 357; these read MLTITD and HR. AMP-binding positions include arginine 257, 272 to 277, valine 317, histidine 338, 338 to 339, lysine 357, threonine 387, alanine 392, 413 to 414, 429 to 432, arginine 456, histidine 485, 485 to 486, and 501 to 504; these read MLTITD, HR, SA, SKFD, and SLSD. ATP-binding positions include arginine 257, 272 to 277, valine 317, 338 to 339, arginine 339, and lysine 357; these read MLTITD and HR. The AMPK pseudosubstrate motif lies at 325–346; sequence LLDAVYSLIKNKIHRLPVIDPI. Residues 429-432, arginine 456, and 485-486 each bind ADP; these read SKFD and HR. Residues 429–432, arginine 456, and 485–486 each bind ATP; these read SKFD and HR. The region spanning 459–517 is the CBS 4 domain; the sequence is YFEGVVKCNKLEILETIVDRIVRAEVHRLVVANEADSIVGIISLSDILQALILTPAGAK.

It belongs to the 5'-AMP-activated protein kinase gamma subunit family. AMPK is a heterotrimer of an alpha catalytic subunit (PRKAA1 or PRKAA2), a beta (PRKAB1 or PRKAB2) and a gamma non-catalytic subunits (PRKAG1, PRKAG2 or PRKAG3). Interacts with FNIP1 and FNIP2. In terms of processing, phosphorylated by ULK1; leading to negatively regulate AMPK activity and suggesting the existence of a regulatory feedback loop between ULK1 and AMPK. Glycosylated; O-GlcNAcylated by OGT, promoting the AMP-activated protein kinase (AMPK) activity.

AMP/ATP-binding subunit of AMP-activated protein kinase (AMPK), an energy sensor protein kinase that plays a key role in regulating cellular energy metabolism. In response to reduction of intracellular ATP levels, AMPK activates energy-producing pathways and inhibits energy-consuming processes: inhibits protein, carbohydrate and lipid biosynthesis, as well as cell growth and proliferation. AMPK acts via direct phosphorylation of metabolic enzymes, and by longer-term effects via phosphorylation of transcription regulators. Also acts as a regulator of cellular polarity by remodeling the actin cytoskeleton; probably by indirectly activating myosin. Gamma non-catalytic subunit mediates binding to AMP, ADP and ATP, leading to activate or inhibit AMPK: AMP-binding results in allosteric activation of alpha catalytic subunit (PRKAA1 or PRKAA2) both by inducing phosphorylation and preventing dephosphorylation of catalytic subunits. ADP also stimulates phosphorylation, without stimulating already phosphorylated catalytic subunit. ATP promotes dephosphorylation of catalytic subunit, rendering the AMPK enzyme inactive. The protein is 5'-AMP-activated protein kinase subunit gamma-2 (PRKAG2) of Pongo abelii (Sumatran orangutan).